The following is a 234-amino-acid chain: UPF0758 protein Smlt0399 (234 aa).

One can recognise an MPN domain in the interval Val103–Leu225. Residues His174, His176, and Asp187 each coordinate Zn(2+). The JAMM motif signature appears at His174–Asp187.

It belongs to the UPF0758 family.

This is UPF0758 protein Smlt0399 from Stenotrophomonas maltophilia (strain K279a).